The following is a 191-amino-acid chain: MTVTNEIDAPPIPRLKQKYREEIIPALREEFGYTNIMQVPGLTKIVVNMGVGDAARDAKLIQGAIADLSAITGQKPKINRAKKSIAQFKLRQGQPIGASVTLRGDRMWEFLDRLLTLALPRIRDFRGLSAKQFDGNGNYTFGLTEQVMFHEIDPDKVDRQRGMDITIVTTAATDEEGRSLLRRLGFPFKED.

Belongs to the universal ribosomal protein uL5 family. In terms of assembly, part of the 50S ribosomal subunit; part of the 5S rRNA/L5/L18/L25 subcomplex. Contacts the 5S rRNA and the P site tRNA. Forms a bridge to the 30S subunit in the 70S ribosome.

Its function is as follows. This is one of the proteins that bind and probably mediate the attachment of the 5S RNA into the large ribosomal subunit, where it forms part of the central protuberance. In the 70S ribosome it contacts protein S13 of the 30S subunit (bridge B1b), connecting the 2 subunits; this bridge is implicated in subunit movement. Contacts the P site tRNA; the 5S rRNA and some of its associated proteins might help stabilize positioning of ribosome-bound tRNAs. This chain is Large ribosomal subunit protein uL5, found in Thermobifida fusca (strain YX).